Reading from the N-terminus, the 341-residue chain is Uroporphyrinogen decarboxylase (341 aa).

Substrate contacts are provided by residues 23-27, aspartate 73, tyrosine 147, serine 202, and histidine 318; that span reads RQAGR.

This sequence belongs to the uroporphyrinogen decarboxylase family. As to quaternary structure, homodimer.

Its subcellular location is the cytoplasm. The enzyme catalyses uroporphyrinogen III + 4 H(+) = coproporphyrinogen III + 4 CO2. The protein operates within porphyrin-containing compound metabolism; protoporphyrin-IX biosynthesis; coproporphyrinogen-III from 5-aminolevulinate: step 4/4. Catalyzes the decarboxylation of four acetate groups of uroporphyrinogen-III to yield coproporphyrinogen-III. The protein is Uroporphyrinogen decarboxylase of Novosphingobium aromaticivorans (strain ATCC 700278 / DSM 12444 / CCUG 56034 / CIP 105152 / NBRC 16084 / F199).